The following is a 4599-amino-acid chain: Low-density lipoprotein receptor-related protein 1B (4599 aa).

The first 20 residues, 1 to 20 (MSEFLLALLTLSGLLPIARV), serve as a signal peptide directing secretion. Over 25–4444 (ADRDQQLCDP…KSDHISTRSI (4420 aa)) the chain is Extracellular. 2 consecutive LDL-receptor class A domains span residues 31–70 (LCDP…DTCP) and 76–114 (KCPL…VHCQ). 12 disulfide bridges follow: cysteine 32/cysteine 45, cysteine 39/cysteine 58, cysteine 52/cysteine 69, cysteine 77/cysteine 90, cysteine 84/cysteine 103, cysteine 97/cysteine 113, cysteine 120/cysteine 129, cysteine 125/cysteine 138, cysteine 140/cysteine 153, cysteine 159/cysteine 169, cysteine 165/cysteine 178, and cysteine 180/cysteine 193. Residues 116–154 (LLSNCQQLNCQYKCTMVRNSTRCYCEDGFEITEDGRSCK) enclose the EGF-like 1 domain. The N-linked (GlcNAc...) asparagine glycan is linked to asparagine 134. Positions 155–194 (DQDECAVYGTCSQTCRNTHGSYTCSCVEGYLMQPDNRSCK) constitute an EGF-like 2; calcium-binding domain. N-linked (GlcNAc...) asparagine glycans are attached at residues asparagine 190, asparagine 220, asparagine 313, and asparagine 360. 3 LDL-receptor class B repeats span residues 295–337 (RNLY…DPIA), 338–381 (GKLF…DLVN), and 382–425 (KLVY…FEDY). N-linked (GlcNAc...) asparagine glycosylation occurs at asparagine 443. The 47-residue stretch at 471–517 (RSHACEVDPYGMPGGCSHICLLSSSYKTRTCRCRTGFNLGSDGRSCK) folds into the EGF-like 3 domain. LDL-receptor class B repeat units follow at residues 568–610 (NYIY…DWIG), 611–656 (NNLY…DPVN), 657–706 (GWMY…DFHT), and 707–750 (NTLY…HGNY). N-linked (GlcNAc...) asparagine glycans are attached at residues asparagine 725 and asparagine 758. Residues 794–834 (GDNMCRVNNGGCSTLCLAIPGGRVCACADNQLLDENGTTCT) enclose the EGF-like 4 domain. 6 disulfide bridges follow: cysteine 798-cysteine 809, cysteine 805-cysteine 818, cysteine 820-cysteine 833, cysteine 845-cysteine 857, cysteine 852-cysteine 870, and cysteine 864-cysteine 881. Asparagine 829 carries an N-linked (GlcNAc...) asparagine glycan. The LDL-receptor class A 3 domain maps to 844-882 (ICKAGEFRCKNRHCIQARWKCDGDDDCLDGSDEDSVNCF). Asparagine 883 carries an N-linked (GlcNAc...) asparagine glycan. LDL-receptor class A domains lie at 885 to 923 (SCPD…QTCT), 926 to 963 (TCQV…ASCE), 966 to 1003 (TCEP…VGCV), 1005 to 1043 (SCFD…INCT), 1052 to 1089 (GCNG…KGCN), 1094 to 1132 (LCDH…DDCD), and 1135 to 1174 (LCGP…YLCD). Cystine bridges form between cysteine 886-cysteine 898, cysteine 893-cysteine 911, cysteine 905-cysteine 922, cysteine 927-cysteine 939, cysteine 934-cysteine 952, cysteine 946-cysteine 962, cysteine 967-cysteine 980, cysteine 975-cysteine 993, cysteine 987-cysteine 1002, cysteine 1006-cysteine 1018, cysteine 1013-cysteine 1031, cysteine 1025-cysteine 1042, cysteine 1053-cysteine 1066, cysteine 1060-cysteine 1079, and cysteine 1073-cysteine 1088. Asparagine 919 carries an N-linked (GlcNAc...) asparagine glycan. An N-linked (GlcNAc...) asparagine glycan is attached at asparagine 1041. Asparagine 1089 carries N-linked (GlcNAc...) asparagine glycosylation. 6 disulfides stabilise this stretch: cysteine 1095/cysteine 1109, cysteine 1103/cysteine 1122, cysteine 1116/cysteine 1131, cysteine 1136/cysteine 1150, cysteine 1143/cysteine 1163, and cysteine 1157/cysteine 1173. An N-linked (GlcNAc...) asparagine glycan is attached at asparagine 1145. EGF-like domains follow at residues 1174-1213 (DECS…KTCE) and 1214-1253 (IVDY…ESCT). N-linked (GlcNAc...) asparagine glycosylation occurs at asparagine 1209. Asparagine 1298 carries an N-linked (GlcNAc...) asparagine glycan. LDL-receptor class B repeat units lie at residues 1300–1346 (SLLY…DWIA), 1347–1389 (GNIY…DPRY), 1390–1436 (GILF…DHFE), 1437–1480 (KRIV…LYGS), and 1481–1522 (EVYW…YHPS). N-linked (GlcNAc...) asparagine glycans are attached at residues asparagine 1502, asparagine 1549, and asparagine 1636. The 44-residue stretch at 1527-1570 (APNPCAANDGKGPCSHMCLINHNRSAACACPHLMKLSSDKKTCY) folds into the EGF-like 7 domain. LDL-receptor class B repeat units lie at residues 1618 to 1660 (ERLY…DWVS), 1661 to 1704 (RNLY…HPVR), 1705 to 1744 (GKLY…DYVE), and 1745 to 1787 (NKLY…TIMD). N-linked (GlcNAc...) asparagine glycosylation is found at asparagine 1754 and asparagine 1816. Residues 1834–1875 (GSNSCQLNNGGCSQLCLPTSETTRTCMCTVGYYLQKNRMSCQ) enclose the EGF-like 8 domain. 3 disulfides stabilise this stretch: cysteine 1838–cysteine 1849, cysteine 1845–cysteine 1859, and cysteine 1861–cysteine 1874. An N-linked (GlcNAc...) asparagine glycan is attached at asparagine 1921. LDL-receptor class B repeat units lie at residues 1922-1964 (DTIY…DWIA), 1965-2007 (GNIY…HPEK), 2008-2051 (GLLF…DYEE), and 2052-2095 (NKLY…FGAY). Residue asparagine 1983 is glycosylated (N-linked (GlcNAc...) asparagine). Residue asparagine 2105 is glycosylated (N-linked (GlcNAc...) asparagine). In terms of domain architecture, EGF-like 9 spans 2143–2183 (GTNVCARDNGGCKQLCLYRGNSRRTCACAHGYLAEDGVTCL). Disulfide bonds link cysteine 2147/cysteine 2158, cysteine 2154/cysteine 2168, and cysteine 2170/cysteine 2182. LDL-receptor class B repeat units lie at residues 2239–2280 (NRIF…HRAW), 2281–2329 (DTLY…DECQ), 2330–2374 (NLMF…DYRA), 2375–2416 (EKLY…VYDN), and 2417–2459 (YIFW…VAND). 3 N-linked (GlcNAc...) asparagine glycosylation sites follow: asparagine 2458, asparagine 2488, and asparagine 2507. In terms of domain architecture, EGF-like 10 spans 2464–2504 (ELSPCALLNGGCHDLCLLTPNGRVNCSCRGDRILLEDNRCV). Residues 2509–2548 (SCNAYSEFECGNGECIDYQLTCDGIPHCKDKSDEKLLYCE) enclose the LDL-receptor class A 11 domain. Cystine bridges form between cysteine 2510–cysteine 2523, cysteine 2518–cysteine 2536, and cysteine 2530–cysteine 2547. Asparagine 2549 is a glycosylation site (N-linked (GlcNAc...) asparagine). LDL-receptor class A domains lie at 2551 to 2587 (SCRR…LDCK), 2590 to 2626 (TCAT…KNCN), 2629 to 2675 (DCTH…LKCP), 2681 to 2717 (KCEE…FHCD), 2719 to 2757 (SCSW…SICG), and 2760 to 2800 (TCAA…AGCA). 6 disulfides stabilise this stretch: cysteine 2552–cysteine 2564, cysteine 2559–cysteine 2577, cysteine 2571–cysteine 2586, cysteine 2591–cysteine 2603, cysteine 2598–cysteine 2616, and cysteine 2610–cysteine 2625. 2 N-linked (GlcNAc...) asparagine glycosylation sites follow: asparagine 2626 and asparagine 2647. 12 disulfides stabilise this stretch: cysteine 2630/cysteine 2652, cysteine 2646/cysteine 2665, cysteine 2659/cysteine 2674, cysteine 2682/cysteine 2694, cysteine 2689/cysteine 2707, cysteine 2701/cysteine 2716, cysteine 2720/cysteine 2732, cysteine 2727/cysteine 2745, cysteine 2739/cysteine 2756, cysteine 2761/cysteine 2774, cysteine 2768/cysteine 2787, and cysteine 2781/cysteine 2799. The N-linked (GlcNAc...) asparagine glycan is linked to asparagine 2802. LDL-receptor class A domains lie at 2804 to 2841 (TCDE…PQCG), 2844 to 2885 (QCGT…PKCK), and 2890 to 2926 (SCNS…RNCH). 15 disulfides stabilise this stretch: cysteine 2805–cysteine 2817, cysteine 2812–cysteine 2830, cysteine 2824–cysteine 2840, cysteine 2845–cysteine 2857, cysteine 2852–cysteine 2871, cysteine 2865–cysteine 2884, cysteine 2891–cysteine 2903, cysteine 2898–cysteine 2916, cysteine 2910–cysteine 2925, cysteine 2930–cysteine 2942, cysteine 2938–cysteine 2951, cysteine 2953–cysteine 2966, cysteine 2972–cysteine 2982, cysteine 2978–cysteine 2991, and cysteine 2993–cysteine 3007. N-linked (GlcNAc...) asparagine glycosylation is present at asparagine 2892. The 41-residue stretch at 2927-2967 (INECLSKKVSGCSQDCQDLPVSYKCKCWPGFQLKDDGKTCV) folds into the EGF-like 11 domain. In terms of domain architecture, EGF-like 12; calcium-binding spans 2968 to 3008 (DIDECSSGFPCSQQCINTYGTYKCLCTDGYEIQPDNPNGCK). N-linked (GlcNAc...) asparagine glycans are attached at residues asparagine 3034, asparagine 3066, and asparagine 3076. LDL-receptor class B repeat units follow at residues 3055-3098 (EFIY…DWIG), 3099-3141 (KNLY…DPQA), 3142-3185 (GYLY…DYVN), 3186-3224 (RRLY…TLFE), and 3225-3268 (DYIY…HSYR). Asparagine 3164 carries N-linked (GlcNAc...) asparagine glycosylation. Positions 3273 to 3314 (SKHLCMINNGGCSHLCLLAPGKTHTCACPTNFYLAADNRTCL) constitute an EGF-like 13 domain. 2 N-linked (GlcNAc...) asparagine glycosylation sites follow: asparagine 3310 and asparagine 3316. 12 LDL-receptor class A domains span residues 3316-3353 (NCTA…DDCP), 3356-3392 (RCQP…LNCD), 3395-3432 (VCLS…RDCP), 3435-3472 (SCSP…ANCD), 3475-3511 (TCGP…ENCK), 3514-3550 (TCTL…RNCE), 3552-3588 (SCSK…KSCE), 3593-3629 (TCSS…MDCV), 3631-3668 (ECKE…ENCE), 3673-3711 (ICRA…DMCV), 3714-3752 (LCPS…DHCG), and 3761-3797 (PCKK…QGCR). 42 disulfides stabilise this stretch: cysteine 3317-cysteine 3329, cysteine 3324-cysteine 3342, cysteine 3336-cysteine 3352, cysteine 3357-cysteine 3369, cysteine 3364-cysteine 3382, cysteine 3376-cysteine 3391, cysteine 3396-cysteine 3409, cysteine 3403-cysteine 3422, cysteine 3416-cysteine 3431, cysteine 3436-cysteine 3449, cysteine 3443-cysteine 3462, cysteine 3456-cysteine 3471, cysteine 3476-cysteine 3488, cysteine 3483-cysteine 3501, cysteine 3495-cysteine 3510, cysteine 3515-cysteine 3527, cysteine 3522-cysteine 3540, cysteine 3534-cysteine 3549, cysteine 3553-cysteine 3565, cysteine 3560-cysteine 3578, cysteine 3572-cysteine 3587, cysteine 3594-cysteine 3606, cysteine 3601-cysteine 3619, cysteine 3613-cysteine 3628, cysteine 3632-cysteine 3645, cysteine 3639-cysteine 3658, cysteine 3652-cysteine 3667, cysteine 3674-cysteine 3686, cysteine 3681-cysteine 3699, cysteine 3693-cysteine 3710, cysteine 3715-cysteine 3729, cysteine 3723-cysteine 3742, cysteine 3736-cysteine 3751, cysteine 3762-cysteine 3774, cysteine 3769-cysteine 3787, cysteine 3781-cysteine 3796, cysteine 3805-cysteine 3818, cysteine 3812-cysteine 3827, cysteine 3829-cysteine 3842, cysteine 3848-cysteine 3858, cysteine 3854-cysteine 3867, and cysteine 3869-cysteine 3880. Asparagine 3682 carries N-linked (GlcNAc...) asparagine glycosylation. EGF-like domains follow at residues 3801–3843 (TEYT…RQCE) and 3844–3881 (DLNE…NTCI). 3 N-linked (GlcNAc...) asparagine glycosylation sites follow: asparagine 3877, asparagine 3894, and asparagine 3906. 4 LDL-receptor class B repeats span residues 3933–3980 (DMII…DWVA), 3981–4038 (GNIY…NPKR), 4039–4082 (GMMY…DYFS), and 4083–4127 (ERIY…FEDY). N-linked (GlcNAc...) asparagine glycosylation is present at asparagine 4017. EGF-like domains lie at 4171–4208 (DLPN…GTCN), 4213–4249 (LDDS…ERCE), 4249–4285 (EVNH…PNCG), 4285–4321 (GKTV…DRCQ), 4321–4357 (QYYV…PKCE), 4357–4392 (EVDK…SSCQ), and 4390–4427 (SCQL…TQCE). N-linked (GlcNAc...) asparagine glycosylation occurs at asparagine 4204. 11 disulfide bridges follow: cysteine 4217-cysteine 4227, cysteine 4221-cysteine 4237, cysteine 4253-cysteine 4263, cysteine 4257-cysteine 4273, cysteine 4275-cysteine 4284, cysteine 4289-cysteine 4299, cysteine 4293-cysteine 4309, cysteine 4311-cysteine 4320, cysteine 4325-cysteine 4335, cysteine 4329-cysteine 4345, and cysteine 4347-cysteine 4356. A glycan (N-linked (GlcNAc...) asparagine) is linked at asparagine 4381. 3 disulfide bridges follow: cysteine 4394-cysteine 4404, cysteine 4398-cysteine 4415, and cysteine 4417-cysteine 4426. A glycan (N-linked (GlcNAc...) asparagine) is linked at asparagine 4420. The helical transmembrane segment at 4445-4467 (AIIVPLVLLVTLITTLVIGLVLC) threads the bilayer. Residues 4468 to 4599 (KRKRRTKTIR…IEIGIRETVA (132 aa)) are Cytoplasmic-facing. Short sequence motifs (endocytosis signal) lie at residues 4492–4495 (NPSY) and 4559–4562 (NPVY).

The protein belongs to the LDLR family. Binds LRPAP1, PLAU, PLAT and SERPINE1; binding is followed by internalization and degradation of the ligands. As to expression, expressed in thyroid gland and in salivary gland, as well as in adult and fetal brain.

It is found in the membrane. Potential cell surface proteins that bind and internalize ligands in the process of receptor-mediated endocytosis. In Homo sapiens (Human), this protein is Low-density lipoprotein receptor-related protein 1B (LRP1B).